Reading from the N-terminus, the 81-residue chain is ATP synthase subunit c (81 aa).

2 helical membrane passes run 7–27 (AASV…PGLG) and 57–77 (FAFM…LLFA).

This sequence belongs to the ATPase C chain family. F-type ATPases have 2 components, F(1) - the catalytic core - and F(0) - the membrane proton channel. F(1) has five subunits: alpha(3), beta(3), gamma(1), delta(1), epsilon(1). F(0) has four main subunits: a(1), b(1), b'(1) and c(10-14). The alpha and beta chains form an alternating ring which encloses part of the gamma chain. F(1) is attached to F(0) by a central stalk formed by the gamma and epsilon chains, while a peripheral stalk is formed by the delta, b and b' chains.

It is found in the cellular thylakoid membrane. F(1)F(0) ATP synthase produces ATP from ADP in the presence of a proton or sodium gradient. F-type ATPases consist of two structural domains, F(1) containing the extramembraneous catalytic core and F(0) containing the membrane proton channel, linked together by a central stalk and a peripheral stalk. During catalysis, ATP synthesis in the catalytic domain of F(1) is coupled via a rotary mechanism of the central stalk subunits to proton translocation. Functionally, key component of the F(0) channel; it plays a direct role in translocation across the membrane. A homomeric c-ring of between 10-14 subunits forms the central stalk rotor element with the F(1) delta and epsilon subunits. This Prochlorococcus marinus (strain MIT 9301) protein is ATP synthase subunit c.